Reading from the N-terminus, the 932-residue chain is MSEAGGRGCGSPVPQRARWRLVAATAAFCLVSATSVWTAGAEPMSREEKQKLGNQVLEMFDHAYGNYMEHAYPADELMPLTCRGRVRGQEPSRGDVDDALGKFSLTLIDSLDTLVVLNKTKEFEDAVRKVLRDVNLDNDVVVSVFETNIRVLGGLLGGHSLAIMLKEKGEYMQWYNDELLQMAKQLGYKLLPAFNTTSGLPYPRINLKFGIRKPEARTGTETDTCTACAGTLILEFAALSRFTGATIFEEYARKALDFLWEKRQRSSNLVGVTINIHTGDWVRKDSGVGAGIDSYYEYLLKAYVLLGDDSFLERFNTHYDAIMRYISQPPLLLDVHIHKPMLNARTWMDALLAFFPGLQVLKGDIRPAIETHEMLYQVIKKHNFLPEAFTTDFRVHWAQHPLRPEFAESTYFLYKATGDPYYLEVGKTLIENLNKYARVPCGFAAMKDVRTGSHEDRMDSFFLAEMFKYLYLLFADKEDIIFDIEDYIFTTEAHLLPLWLSTTNQSISKKNTTSEYTELDDSNFDWTCPNTQILFPNDPLYAQSIREPLKNVVDKSCPRGIIRVEESFRSGAKPPLRARDFMATNPEHLEILKKMGVSLIHLKDGRVQLVQHAIQAASSIDAEDGLRFMQEMIELSSQQQKEQQLPPRAVQIVSHPFFGRVVLTAGPAQFGLDLSKHKETRGFVASSKPSNGCSELTNPEAVMGKIALIQRGQCMFAEKARNIQNAGAIGGIVIDDNEGSSSDTAPLFQMAGDGKDTDDIKIPMLFLFSKEGSIILDAIREYEEVEVLLSDKAKDRDPEMENEEQPSSENDSQNQSGEQISSSSQEVDLVDQESSEENSLNSHPESLSLADMDNAASISPSEQTSNPTENHETTNLNGECTDLDNQLQEQSETEEDSNPNVSWGKKVQPIDSILADWNEDIEAFEMMEKDEL.

The signal sequence occupies residues 1-41 (MSEAGGRGCGSPVPQRARWRLVAATAAFCLVSATSVWTAGA). An N-linked (GlcNAc...) asparagine glycan is attached at asparagine 118. Glutamate 146 acts as the Proton donor in catalysis. The N-linked (GlcNAc...) asparagine glycan is linked to asparagine 195. The active site involves aspartate 293. Glutamate 387 serves as the catalytic Proton donor. Glutamate 405 is an active-site residue. Ca(2+) is bound at residue threonine 491. Asparagine 504 and asparagine 511 each carry an N-linked (GlcNAc...) asparagine glycan. One can recognise a PA domain in the interval 674 to 779 (LSKHKETRGF…KEGSIILDAI (106 aa)). Residues 790 to 799 (SDKAKDRDPE) are compositionally biased toward basic and acidic residues. Residues 790-908 (SDKAKDRDPE…PNVSWGKKVQ (119 aa)) form a disordered region. Residues asparagine 810 and asparagine 814 are each glycosylated (N-linked (GlcNAc...) asparagine). Residues 812–825 (SQNQSGEQISSSSQ) are compositionally biased toward low complexity. Positions 856–890 (ASISPSEQTSNPTENHETTNLNGECTDLDNQLQEQ) are enriched in polar residues. An N-linked (GlcNAc...) asparagine glycan is attached at asparagine 900. The Prevents secretion from ER motif lies at 929–932 (KDEL).

It belongs to the glycosyl hydrolase 47 family. Ca(2+) is required as a cofactor.

It is found in the endoplasmic reticulum lumen. It catalyses the reaction N(4)-(alpha-D-Man-(1-&gt;2)-alpha-D-Man-(1-&gt;2)-alpha-D-Man-(1-&gt;3)-[alpha-D-Man-(1-&gt;2)-alpha-D-Man-(1-&gt;3)-[alpha-D-Man-(1-&gt;2)-alpha-D-Man-(1-&gt;6)]-alpha-D-Man-(1-&gt;6)]-beta-D-Man-(1-&gt;4)-beta-D-GlcNAc-(1-&gt;4)-beta-D-GlcNAc)-L-asparaginyl-[protein] (N-glucan mannose isomer 9A1,2,3B1,2,3) + 4 H2O = N(4)-(alpha-D-Man-(1-&gt;3)-[alpha-D-Man-(1-&gt;3)-[alpha-D-Man-(1-&gt;6)]-alpha-D-Man-(1-&gt;6)]-beta-D-Man-(1-&gt;4)-beta-D-GlcNAc-(1-&gt;4)-beta-D-GlcNAc)-L-asparaginyl-[protein] (N-glucan mannose isomer 5A1,2) + 4 beta-D-mannose. It carries out the reaction N(4)-(alpha-D-Man-(1-&gt;2)-alpha-D-Man-(1-&gt;2)-alpha-D-Man-(1-&gt;3)-[alpha-D-Man-(1-&gt;3)-[alpha-D-Man-(1-&gt;2)-alpha-D-Man-(1-&gt;6)]-alpha-D-Man-(1-&gt;6)]-beta-D-Man-(1-&gt;4)-beta-D-GlcNAc-(1-&gt;4)-beta-D-GlcNAc)-L-asparaginyl-[protein] (N-glucan mannose isomer 8A1,2,3B1,3) + 3 H2O = N(4)-(alpha-D-Man-(1-&gt;3)-[alpha-D-Man-(1-&gt;3)-[alpha-D-Man-(1-&gt;6)]-alpha-D-Man-(1-&gt;6)]-beta-D-Man-(1-&gt;4)-beta-D-GlcNAc-(1-&gt;4)-beta-D-GlcNAc)-L-asparaginyl-[protein] (N-glucan mannose isomer 5A1,2) + 3 beta-D-mannose. It participates in protein modification; protein glycosylation. Functionally, involved in endoplasmic reticulum-associated degradation (ERAD). Accelerates the glycoprotein ERAD by proteasomes, by catalyzing mannose trimming from Man8GlcNAc2 to Man7GlcNAc2 in the N-glycans. May also participate in mannose trimming from all glycoproteins and not just misfolded ones targeted to ERAD. May have alpha 1,2-mannosidase activity. The sequence is that of ER degradation-enhancing alpha-mannosidase-like protein 3 (EDEM3) from Homo sapiens (Human).